The following is a 301-amino-acid chain: MEEKEFKSGFVALLGRPNVGKSTLMNYLVGQKVAITSNKPQTTRNRISGIYTSDKMQVVFVDTPGIFKPHSKLDDYMDKASLSSLNDVDLVLFMVEPEEIGKGDQYIANLLKEVKVPVFLVINKVDQIHPNKLLLIMDSYHKLEGFKEILPISATQGIGIEDLLNTINKYLPEGPQYYGADQITDRPEYFVVAELIREQILRLTSQEVPHATAVAVDQMNKHQNGKLLIEATIYVEKDGQKGIIIGKGGKMLKQIGINSRKEIEHLLGEKVNLRLWVKVQHNWRSDPSFLKQIGYDKKELS.

Positions 7–173 (KSGFVALLGR…LNTINKYLPE (167 aa)) constitute an Era-type G domain. A G1 region spans residues 15-22 (GRPNVGKS). Position 15 to 22 (15 to 22 (GRPNVGKS)) interacts with GTP. A G2 region spans residues 41–45 (QTTRN). Residues 62–65 (DTPG) are G3. GTP contacts are provided by residues 62 to 66 (DTPGI) and 123 to 126 (NKVD). The segment at 123–126 (NKVD) is G4. The interval 152-154 (ISA) is G5. The 78-residue stretch at 204 to 281 (TSQEVPHATA…NLRLWVKVQH (78 aa)) folds into the KH type-2 domain.

The protein belongs to the TRAFAC class TrmE-Era-EngA-EngB-Septin-like GTPase superfamily. Era GTPase family. Monomer.

Its subcellular location is the cytoplasm. It localises to the cell membrane. An essential GTPase that binds both GDP and GTP, with rapid nucleotide exchange. Plays a role in 16S rRNA processing and 30S ribosomal subunit biogenesis and possibly also in cell cycle regulation and energy metabolism. The protein is GTPase Era of Lactobacillus helveticus (strain DPC 4571).